Consider the following 380-residue polypeptide: 3-methylitaconate isomerase (380 aa).

This sequence belongs to the PrpF family. Homotetramer.

It catalyses the reaction 2-methylene-3-methylsuccinate = dimethylmaleate. Its pathway is cofactor degradation; nicotinate degradation; propanoate and pyruvate from 6-hydroxynicotinate: step 6/8. With respect to regulation, inhibited by oxidized glutathione, p-chloromercuriphenylsulfonic acid and iodoacetic acid. Not inhibited by the chelating agent alpha,alpha-dipyridyl. Activity is slightly increased by EDTA. Not activated by Fe(2+), Mg(2+), Mn(2+) or Ca(2+). Unaffected by K(+), Na(+), NH4(+), Rb(+) or Li(+). Catalyzes the reversible isomerization of (R)-3-methylitaconate to 2,3-dimethylmaleate. Has very low isomerase activity with itaconate. This is 3-methylitaconate isomerase (mii) from Eubacterium barkeri (Clostridium barkeri).